Consider the following 257-residue polypeptide: Major prion protein (257 aa).

Positions 1-24 (MVKSHIGGWILVLFVAAWSDIGLC) are cleaved as a signal peptide. The tract at residues 25 to 234 (KKRPKPGGGW…EYEAYAQRGA (210 aa)) is interaction with GRB2, ERI3 and SYN1. A disordered region spans residues 28–113 (PKPGGGWNTG…NKPSKPKTNM (86 aa)). 5 repeat units span residues 54-62 (PQGGGGWGQ), 63-70 (PHGGGWGQ), 71-78 (PHGGGWGQ), 79-86 (PHGGGWGQ), and 87-95 (PHGGGGWGQ). The 5 X 8 AA tandem repeats of P-H-G-G-G-W-G-Q stretch occupies residues 54 to 95 (PQGGGGWGQPHGGGWGQPHGGGWGQPHGGGWGQPHGGGGWGQ). Residues 55–100 (QGGGGWGQPHGGGWGQPHGGGWGQPHGGGWGQPHGGGGWGQGGGSH) are compositionally biased toward gly residues. Cu(2+)-binding residues include histidine 64, glycine 65, glycine 66, histidine 72, glycine 73, glycine 74, histidine 80, glycine 81, glycine 82, histidine 88, glycine 90, and glycine 91. An intrachain disulfide couples cysteine 183 to cysteine 218. 2 N-linked (GlcNAc...) asparagine glycosylation sites follow: asparagine 185 and asparagine 201. Alanine 234 carries the GPI-anchor amidated alanine lipid modification. A propeptide spans 235 to 257 (SVILFSSPPVILLISFLLFLIVG) (removed in mature form).

The protein belongs to the prion family. As to quaternary structure, monomer and homodimer. Has a tendency to aggregate into amyloid fibrils containing a cross-beta spine, formed by a steric zipper of superposed beta-strands. Soluble oligomers may represent an intermediate stage on the path to fibril formation. Copper binding may promote oligomerization. Interacts with GRB2, APP, ERI3/PRNPIP and SYN1. Mislocalized cytosolically exposed PrP interacts with MGRN1; this interaction alters MGRN1 subcellular location and causes lysosomal enlargement. Interacts with KIAA1191.

Its subcellular location is the cell membrane. The protein localises to the golgi apparatus. Its function is as follows. Its primary physiological function is unclear. Has cytoprotective activity against internal or environmental stresses. May play a role in neuronal development and synaptic plasticity. May be required for neuronal myelin sheath maintenance. May play a role in iron uptake and iron homeostasis. Soluble oligomers are toxic to cultured neuroblastoma cells and induce apoptosis (in vitro). Association with GPC1 (via its heparan sulfate chains) targets PRNP to lipid rafts. Also provides Cu(2+) or Zn(2+) for the ascorbate-mediated GPC1 deaminase degradation of its heparan sulfate side chains. The protein is Major prion protein (PRNP) of Sus scrofa (Pig).